Here is a 218-residue protein sequence, read N- to C-terminus: uncharacterized protein (218 aa).

One can recognise an ABC transporter domain in the interval 2 to 216 (IEVLNLTKKI…ETSEKVIYKK (215 aa)). 34–41 (GSNGSGKT) provides a ligand contact to ATP.

Belongs to the ABC transporter superfamily.

This is an uncharacterized protein from Bacillus subtilis (strain 168).